Here is an 85-residue protein sequence, read N- to C-terminus: Dual endothelin-1/VEGF signal peptide receptor (85 aa).

Over 1-18 (MTMFKGSNEMKSRWNWGS) the chain is Extracellular. A helical membrane pass occupies residues 19-37 (ITCIICFTCVGSQLSMSSS). The Cytoplasmic portion of the chain corresponds to 38-85 (KASNFSGPLQLYQRELEIFIVLTDVPNYRLIKENSHLHTTIVDQGRTV).

N-glycosylated. As to expression, expressed in kidney. Expressed in endothelial cells.

It localises to the cell membrane. Functionally, dual receptor for both endothelin-1 and the signal sequence of vascular endothelial growth factor A. Does not act as a receptor for angiotensin-2. Does not bind the VEGFA mature protein. May play a role in angiogenesis with a significant role in cardiovascular and neural development. The protein is Dual endothelin-1/VEGF signal peptide receptor of Homo sapiens (Human).